A 367-amino-acid polypeptide reads, in one-letter code: RYamide receptor (367 aa).

The Extracellular portion of the chain corresponds to 1–35 (MDANTTRNESFSLDCELVNPNSTLANVYFLSAVYS). Residues Asn4, Asn8, and Asn21 are each glycosylated (N-linked (GlcNAc...) asparagine). Residues 36 to 56 (MYAIIFVVALIGNSFVCYIVL) form a helical membrane-spanning segment. Residues 57-66 (SSPPMRTVTN) are Cytoplasmic-facing. A helical membrane pass occupies residues 67-87 (FFILNLAIGDVLITLLCVPFT). The Extracellular portion of the chain corresponds to 88 to 113 (SVSLLMQYWPFGGILCPVVNYSQALS). Asn107 is a glycosylation site (N-linked (GlcNAc...) asparagine). A helical transmembrane segment spans residues 114-134 (VFVSAYTLVAISIDKYMIIMW). The Cytoplasmic segment spans residues 135 to 143 (PLKPRISKR). Residues 144–164 (FATYIIALVWLIAGITVLPSA) traverse the membrane as a helical segment. Residues 165–212 (TFTTLINDENILGTSAYEQCDKYICAEEYSKVGQEYGDLYTKVLMFLQ) are Extracellular-facing. The helical transmembrane segment at 213–233 (YVIPSLVLLFTYTSIGVVIWC) threads the bilayer. Residues 234–258 (HRIPGEAENSRDQRIAKNKTKMIKM) lie on the Cytoplasmic side of the membrane. A helical transmembrane segment spans residues 259–279 (MVTVVCVYTICWLPYNVLMIF). The Extracellular segment spans residues 280–282 (KEH). A helical transmembrane segment spans residues 283–303 (ISGSVMVYLYFPLHGLAMSHA). Topologically, residues 304 to 367 (CYNPIIYCYM…EITRAQPTSA (64 aa)) are cytoplasmic.

The protein belongs to the G-protein coupled receptor 1 family.

The protein resides in the cell membrane. Its function is as follows. Receptor for the neuropeptides RYamide-1 and RYamide-2. The activity of this receptor is mediated by G proteins which activate a phosphatidyl-inositol-calcium second messenger system. RYamide-2 is the most potent activator. This is RYamide receptor from Tribolium castaneum (Red flour beetle).